We begin with the raw amino-acid sequence, 882 residues long: MAPAVARPRRGAEIRAAFLEFYESRGHQPIPSASLIPVDPTVLLTIAGMLPFKPVFLGQQERPAPRATSSQKCIRTNDIENVGRTARHHTFFEMLGNFSFGDYFKQQAIEWAWELSTEVFGLDPKNLVVSVFREDDEAEAIWRDVVGVNPKRIIRMDEADNFWASGPTGPCGPCSEIYYDFKPALGDEDIDLEDDSRFIEFYNLVFMQYSRDAEGTLTPLANKNIDTGLGLERMAQILQGVPNNYETDLIYPLIETAAGLAGVDYRQLDVKGQTSLKVIGDHSRAVTQLICDGVTASNLGRGYILRRLLRRVVRHGRLLGISKPFLVAMGEAAIALMQAAYPQLNERRELILAELQREEARFLETLERGEKLLADVLAAKPKQISGEQAFELYDTYGFPLELTEEIAEEHGLSVDLAGFEAAMEAQRQRAKAAAVSIDLTLQGAIEQMAADLEATAFRGYEALEHPSCVVALVVNGEPAQTASAGDAVQLVLDSTPFYGEGGGQVGDRGSLNGQDLIVSIESVNRQRDVSVHHGTIERGQLSVGDLVTAQVDPTCRRRAQAHHTATHLLQAALKQVVDSSISQAGSLVDFDRLRFDFHCPRAVTPAELEQLEALINGWITEAHSLEVQEMAIEAAKAAGAVAMFGEKYADVVRVVDVPGVSMELCGGTHVANTAEIGLFKIVSEAGVASGIRRIEAVAGPAVLAYLNERDVVVKQLSERFKVQPAEITARVAGLQEELKGATKALAAARSELAVAKAAALAAQAEAIGEHQLLVARLDGVDGGGLQSAAQGLADQLGDGAAVVLGGLPDPSDLGKVILVAAFGKAVVAKGQKAGQFIGGVAKLCGGGGGGRPNLAQAGGRDGAALDGALEQAKSSLQQELQG.

Zn(2+)-binding residues include histidine 563, histidine 567, cysteine 665, and histidine 669.

It belongs to the class-II aminoacyl-tRNA synthetase family. Zn(2+) is required as a cofactor.

The protein localises to the cytoplasm. It catalyses the reaction tRNA(Ala) + L-alanine + ATP = L-alanyl-tRNA(Ala) + AMP + diphosphate. In terms of biological role, catalyzes the attachment of alanine to tRNA(Ala) in a two-step reaction: alanine is first activated by ATP to form Ala-AMP and then transferred to the acceptor end of tRNA(Ala). Also edits incorrectly charged Ser-tRNA(Ala) and Gly-tRNA(Ala) via its editing domain. This chain is Alanine--tRNA ligase, found in Synechococcus sp. (strain RCC307).